Reading from the N-terminus, the 288-residue chain is Protoheme IX farnesyltransferase (288 aa).

9 consecutive transmembrane segments (helical) span residues V6–L26, F44–I64, L89–I109, V111–F131, I138–V158, L169–F189, I213–I233, L238–I258, and I268–V288.

This sequence belongs to the UbiA prenyltransferase family. Protoheme IX farnesyltransferase subfamily.

The protein resides in the cell membrane. It catalyses the reaction heme b + (2E,6E)-farnesyl diphosphate + H2O = Fe(II)-heme o + diphosphate. It participates in porphyrin-containing compound metabolism; heme O biosynthesis; heme O from protoheme: step 1/1. Converts heme B (protoheme IX) to heme O by substitution of the vinyl group on carbon 2 of heme B porphyrin ring with a hydroxyethyl farnesyl side group. This chain is Protoheme IX farnesyltransferase, found in Buchnera aphidicola subsp. Baizongia pistaciae (strain Bp).